A 302-amino-acid polypeptide reads, in one-letter code: UDP-N-acetylenolpyruvoylglucosamine reductase (302 aa).

The 183-residue stretch at lysine 31–arginine 213 folds into the FAD-binding PCMH-type domain. Arginine 176 is a catalytic residue. The Proton donor role is filled by serine 226. Glutamate 296 is a catalytic residue.

Belongs to the MurB family. FAD is required as a cofactor.

It is found in the cytoplasm. The enzyme catalyses UDP-N-acetyl-alpha-D-muramate + NADP(+) = UDP-N-acetyl-3-O-(1-carboxyvinyl)-alpha-D-glucosamine + NADPH + H(+). It functions in the pathway cell wall biogenesis; peptidoglycan biosynthesis. Its function is as follows. Cell wall formation. The protein is UDP-N-acetylenolpyruvoylglucosamine reductase of Carboxydothermus hydrogenoformans (strain ATCC BAA-161 / DSM 6008 / Z-2901).